Here is an 811-residue protein sequence, read N- to C-terminus: E3 ubiquitin-protein ligase RNF10 (811 aa).

Polar residues predominate over residues 1 to 10; the sequence is MPLSSPNAAA. The disordered stretch occupies residues 1-119; it reads MPLSSPNAAA…SFNGGRRDEV (119 aa). Ser5 bears the Phosphoserine mark. 3 stretches are compositionally biased toward low complexity: residues 18 to 31, 78 to 90, and 104 to 113; these read NSGSNSSSASSGSS, NNQSRRSSSQKSK, and SKLFSSSFNG. The interaction with MEOX2 stretch occupies residues 101-185; the sequence is GGSSKLFSSS…FNKELFLQAN (85 aa). 2 positions are modified to phosphoserine: Ser110 and Ser128. Residues 225-267 form an RING-type zinc finger; the sequence is CPICLYPPTAAKITRCGHIFCWACILHYLSLSEKTWSKCPICY. Polar residues predominate over residues 653-662; the sequence is DSALGPTSTE. 3 disordered regions span residues 653 to 672, 724 to 761, and 776 to 811; these read DSALGPTSTEGHGALSISPL, DVWPKTAPKKDENSLVPPAPVDSDGESDNSDRVPVPSF, and LDTPATSDPLSEEKGGKKRKKQKQKLLFSTSVVHTK. A compositionally biased stretch (basic and acidic residues) spans 724-736; that stretch reads DVWPKTAPKKDEN. A compositionally biased stretch (polar residues) spans 802–811; sequence LFSTSVVHTK.

This sequence belongs to the RNF10 family. Interacts with MEOX2.

The protein localises to the cytoplasm. The protein resides in the nucleus. The catalysed reaction is S-ubiquitinyl-[E2 ubiquitin-conjugating enzyme]-L-cysteine + [acceptor protein]-L-lysine = [E2 ubiquitin-conjugating enzyme]-L-cysteine + N(6)-ubiquitinyl-[acceptor protein]-L-lysine.. It participates in protein modification; protein ubiquitination. E3 ubiquitin-protein ligase that catalyzes monoubiquitination of 40S ribosomal proteins RPS2/us5 and RPS3/us3 in response to ribosome stalling. Part of a ribosome quality control that takes place when ribosomes have stalled during translation initiation (iRQC): RNF10 acts by mediating monoubiquitination of RPS2/us5 and RPS3/us3, promoting their degradation by the proteasome. Also promotes ubiquitination of 40S ribosomal proteins in response to ribosome stalling during translation elongation. The action of RNF10 in iRQC is counteracted by USP10. May also act as a transcriptional factor involved in the regulation of MAG (Myelin-associated glycoprotein) expression. Acts as a regulator of Schwann cell differentiation and myelination. The chain is E3 ubiquitin-protein ligase RNF10 from Homo sapiens (Human).